The following is a 50-amino-acid chain: Large ribosomal subunit protein eL39 (50 aa).

The segment covering 1–12 (MGKKSKAKKKRL) has biased composition (basic residues). The interval 1 to 21 (MGKKSKAKKKRLGKLEKQNSR) is disordered.

The protein belongs to the eukaryotic ribosomal protein eL39 family.

This is Large ribosomal subunit protein eL39 from Haloquadratum walsbyi (strain DSM 16790 / HBSQ001).